The sequence spans 393 residues: Methylthioribose kinase (393 aa).

ATP-binding positions include Asn38, Lys53, and 107 to 109 (EDL). Asp225 is a binding site for substrate. An ATP-binding site is contributed by 242–244 (DPE). Arg332 is a binding site for substrate.

Belongs to the methylthioribose kinase family. As to quaternary structure, homodimer.

The enzyme catalyses 5-(methylsulfanyl)-D-ribose + ATP = 5-(methylsulfanyl)-alpha-D-ribose 1-phosphate + ADP + H(+). Its pathway is amino-acid biosynthesis; L-methionine biosynthesis via salvage pathway; S-methyl-5-thio-alpha-D-ribose 1-phosphate from S-methyl-5'-thioadenosine (hydrolase route): step 2/2. Functionally, catalyzes the phosphorylation of methylthioribose into methylthioribose-1-phosphate. The polypeptide is Methylthioribose kinase (Bacillus cereus (strain AH820)).